Reading from the N-terminus, the 482-residue chain is Probable cytosol aminopeptidase (482 aa).

The Mn(2+) site is built by K251 and D256. K263 is a catalytic residue. D274, D333, and E335 together coordinate Mn(2+). Residue R337 is part of the active site.

It belongs to the peptidase M17 family. It depends on Mn(2+) as a cofactor.

The protein resides in the cytoplasm. The enzyme catalyses Release of an N-terminal amino acid, Xaa-|-Yaa-, in which Xaa is preferably Leu, but may be other amino acids including Pro although not Arg or Lys, and Yaa may be Pro. Amino acid amides and methyl esters are also readily hydrolyzed, but rates on arylamides are exceedingly low.. The catalysed reaction is Release of an N-terminal amino acid, preferentially leucine, but not glutamic or aspartic acids.. Its function is as follows. Presumably involved in the processing and regular turnover of intracellular proteins. Catalyzes the removal of unsubstituted N-terminal amino acids from various peptides. This is Probable cytosol aminopeptidase from Acinetobacter baumannii (strain SDF).